A 243-amino-acid polypeptide reads, in one-letter code: uncharacterized protein (243 aa).

Composition is skewed to basic and acidic residues over residues 1 to 11 (MSDEGYRELVE) and 167 to 178 (RNRDPPRPSYLR). Disordered regions lie at residues 1–26 (MSDE…SPDR) and 146–243 (ELYQ…CWPF). Residues 185–200 (STTTARRPRAMTSTPE) show a composition bias toward low complexity.

This is an uncharacterized protein from Canis lupus familiaris (Dog).